A 131-amino-acid polypeptide reads, in one-letter code: Ribosome-binding factor A (131 aa).

The protein belongs to the RbfA family. In terms of assembly, monomer. Binds 30S ribosomal subunits, but not 50S ribosomal subunits or 70S ribosomes.

Its subcellular location is the cytoplasm. Its function is as follows. One of several proteins that assist in the late maturation steps of the functional core of the 30S ribosomal subunit. Associates with free 30S ribosomal subunits (but not with 30S subunits that are part of 70S ribosomes or polysomes). Required for efficient processing of 16S rRNA. May interact with the 5'-terminal helix region of 16S rRNA. The sequence is that of Ribosome-binding factor A from Protochlamydia amoebophila (strain UWE25).